Reading from the N-terminus, the 446-residue chain is Putative diacyglycerol O-acyltransferase Rv3371 (446 aa).

The active-site Proton acceptor is the histidine 129. Positions 425 to 446 (SRALPSAARRGRPSVPTARARH) are disordered.

This sequence belongs to the long-chain O-acyltransferase family.

The catalysed reaction is an acyl-CoA + a 1,2-diacyl-sn-glycerol = a triacyl-sn-glycerol + CoA. It catalyses the reaction di-(9Z)-octadecenoylglycerol + (9Z)-octadecenoyl-CoA = 1,2,3-tri-(9Z-octadecenoyl)-glycerol + CoA. Its pathway is glycerolipid metabolism; triacylglycerol biosynthesis. Functionally, catalyzes the terminal and only committed step in triacylglycerol synthesis by using diacylglycerol and fatty acyl CoA as substrates. Required for storage lipid synthesis. In terms of biological role, upon expression in E.coli functions weakly as a triacylglycerol synthase, making triacylglycerol (TG) from diolein and long-chain fatty acyl-CoA. Has no wax synthase activity to produce wax esters. The polypeptide is Putative diacyglycerol O-acyltransferase Rv3371 (Mycobacterium tuberculosis (strain ATCC 25618 / H37Rv)).